The sequence spans 422 residues: Mannose-1-phosphate guanylyltransferase regulatory subunit alpha-B (422 aa).

Positions L2–A253 are substrate-binding domain. The GDP-alpha-D-mannose site is built by E85 and Q249. The interval L275 to L422 is hexapeptide repeat domain. The tract at residues T358 to I386 is C-loop.

It belongs to the transferase hexapeptide repeat family. In terms of assembly, component of the GMPPA-GMPPB mannose-1-phosphate guanylyltransferase complex composed of 4 GMPPA subunits and 8 GMPPB subunits; the complex is organized into three layers, a central layer made up of 2 GMPPA dimers sandwiched between two layers each made up of 2 GMPPB dimers.

Its pathway is nucleotide-sugar biosynthesis; GDP-alpha-D-mannose biosynthesis; GDP-alpha-D-mannose from alpha-D-mannose 1-phosphate (GTP route): step 1/1. Functionally, regulatory subunit of the GMPPA-GMPPB mannose-1-phosphate guanylyltransferase complex; reduces the catalytic activity of GMPPB when part of the complex. Mediates allosteric feedback inhibition of GMPPB catalytic activity upon binding GDP-alpha-D-mannose. Together with GMPPB regulates GDP-alpha-D-mannose levels. One of two paralogs (gmppaa and gmppab) that may have redundant functions. The sequence is that of Mannose-1-phosphate guanylyltransferase regulatory subunit alpha-B (gmppab) from Danio rerio (Zebrafish).